Consider the following 362-residue polypeptide: Sphingosine 1-phosphate receptor 1 (362 aa).

Topologically, residues 1–25 are extracellular; it reads MDDLIARHYNFTGKFRKVHKDPGLK. N-linked (GlcNAc...) asparagine glycosylation is present at N10. The chain crosses the membrane as a helical span at residues 26–47; that stretch reads ADSVVFIIVCCFIILENVLVLL. Topologically, residues 48–61 are cytoplasmic; it reads TIWRTKKFHKPMYY. A helical membrane pass occupies residues 62–83; that stretch reads FIGNLALSDLLAGVVYTANILL. Residues 84-95 lie on the Extracellular side of the membrane; sequence SGANTYKLTPTQ. Residues 96–117 traverse the membrane as a helical segment; sequence WFFREGSMFVALAASVFSLLAI. Residue 99–100 coordinates sphing-4-enine 1-phosphate; the sequence is RE. Residues 118–139 are Cytoplasmic-facing; sequence AIERHLTMLKMKLHNNGKTCRV. A helical transmembrane segment spans residues 140–161; it reads FMLISTVWFIAAILGGLPVMGW. The Extracellular portion of the chain corresponds to 162-175; sequence NCIDSMNNCSTVLP. A disulfide bond links C163 and C170. N169 carries N-linked (GlcNAc...) asparagine glycosylation. The helical transmembrane segment at 176-203 threads the bilayer; that stretch reads LYHKAYILFCTTVFSVILMAIVILYARI. The Cytoplasmic segment spans residues 204 to 238; it reads YALVRTRSRKLVFRKVANGRGSNKSSEKSMALLKT. A helical membrane pass occupies residues 239–259; that stretch reads VIIVLSCFIACWAPLFILLLL. 246–250 provides a ligand contact to sphing-4-enine 1-phosphate; it reads FIACW. Topologically, residues 260–270 are extracellular; sequence DVACQTLTCSI. A disulfide bridge links C263 with C268. The helical transmembrane segment at 271-291 threads the bilayer; sequence LYKAEWFLALAVLNSAMNPLI. Residues 292-362 lie on the Cytoplasmic side of the membrane; sequence YTLTSNEMRR…VSSGNITSSS (71 aa). The S-palmitoyl cysteine moiety is linked to residue C309. Positions 328–362 are disordered; sequence FSRSKSDNSSHPNKDEPEYSPRETIVSSGNITSSS. Over residues 329–348 the composition is skewed to basic and acidic residues; sequence SRSKSDNSSHPNKDEPEYSP. Positions 352–362 are enriched in polar residues; sequence IVSSGNITSSS.

The protein belongs to the G-protein coupled receptor 1 family.

The protein localises to the cell membrane. In terms of biological role, G-protein coupled receptor for the bioactive lysosphingolipid sphingosine 1-phosphate (S1P) that seems to be coupled to the G(i) subclass of heteromeric G proteins. Signaling leads to the activation of RAC1, SRC, PTK2/FAK1 and MAP kinases. Plays an important role in cell migration, probably via its role in the reorganization of the actin cytoskeleton and the formation of lamellipodia in response to stimuli that increase the activity of the sphingosine kinase SPHK1. Required for normal chemotaxis toward sphingosine 1-phosphate. In Danio rerio (Zebrafish), this protein is Sphingosine 1-phosphate receptor 1 (s1pr1).